The primary structure comprises 367 residues: UDP-N-acetylglucosamine--N-acetylmuramyl-(pentapeptide) pyrophosphoryl-undecaprenol N-acetylglucosamine transferase (367 aa).

UDP-N-acetyl-alpha-D-glucosamine is bound by residues 21-23 (TGG), Asn129, Arg170, Ser198, and Gln295.

The protein belongs to the glycosyltransferase 28 family. MurG subfamily.

The protein localises to the cell inner membrane. It catalyses the reaction di-trans,octa-cis-undecaprenyl diphospho-N-acetyl-alpha-D-muramoyl-L-alanyl-D-glutamyl-meso-2,6-diaminopimeloyl-D-alanyl-D-alanine + UDP-N-acetyl-alpha-D-glucosamine = di-trans,octa-cis-undecaprenyl diphospho-[N-acetyl-alpha-D-glucosaminyl-(1-&gt;4)]-N-acetyl-alpha-D-muramoyl-L-alanyl-D-glutamyl-meso-2,6-diaminopimeloyl-D-alanyl-D-alanine + UDP + H(+). It participates in cell wall biogenesis; peptidoglycan biosynthesis. Functionally, cell wall formation. Catalyzes the transfer of a GlcNAc subunit on undecaprenyl-pyrophosphoryl-MurNAc-pentapeptide (lipid intermediate I) to form undecaprenyl-pyrophosphoryl-MurNAc-(pentapeptide)GlcNAc (lipid intermediate II). This Synechococcus sp. (strain JA-2-3B'a(2-13)) (Cyanobacteria bacterium Yellowstone B-Prime) protein is UDP-N-acetylglucosamine--N-acetylmuramyl-(pentapeptide) pyrophosphoryl-undecaprenol N-acetylglucosamine transferase.